Reading from the N-terminus, the 305-residue chain is tRNA dimethylallyltransferase (305 aa).

9–16 is a binding site for ATP; it reads GPTASGKT. 11-16 is a binding site for substrate; that stretch reads TASGKT. Interaction with substrate tRNA regions lie at residues 34 to 37, 158 to 162, and 239 to 244; these read DSAL, QRLSR, and RCVGYR.

The protein belongs to the IPP transferase family. In terms of assembly, monomer. It depends on Mg(2+) as a cofactor.

The enzyme catalyses adenosine(37) in tRNA + dimethylallyl diphosphate = N(6)-dimethylallyladenosine(37) in tRNA + diphosphate. Catalyzes the transfer of a dimethylallyl group onto the adenine at position 37 in tRNAs that read codons beginning with uridine, leading to the formation of N6-(dimethylallyl)adenosine (i(6)A). The protein is tRNA dimethylallyltransferase of Aeromonas hydrophila subsp. hydrophila (strain ATCC 7966 / DSM 30187 / BCRC 13018 / CCUG 14551 / JCM 1027 / KCTC 2358 / NCIMB 9240 / NCTC 8049).